We begin with the raw amino-acid sequence, 101 residues long: Integration host factor subunit beta (101 aa).

A disordered region spans residues 57–101 (PARAGRNPRTGAHVPVDQKSVPFFKTGKEMRERLNRDHPDPGAAD). Basic and acidic residues predominate over residues 82 to 101 (TGKEMRERLNRDHPDPGAAD).

Belongs to the bacterial histone-like protein family. As to quaternary structure, heterodimer of an alpha and a beta chain.

This protein is one of the two subunits of integration host factor, a specific DNA-binding protein that functions in genetic recombination as well as in transcriptional and translational control. In Bradyrhizobium diazoefficiens (strain JCM 10833 / BCRC 13528 / IAM 13628 / NBRC 14792 / USDA 110), this protein is Integration host factor subunit beta.